The following is a 141-amino-acid chain: Large ribosomal subunit protein uL11 (141 aa).

It belongs to the universal ribosomal protein uL11 family. As to quaternary structure, part of the ribosomal stalk of the 50S ribosomal subunit. Interacts with L10 and the large rRNA to form the base of the stalk. L10 forms an elongated spine to which L12 dimers bind in a sequential fashion forming a multimeric L10(L12)X complex. In terms of processing, one or more lysine residues are methylated.

Its function is as follows. Forms part of the ribosomal stalk which helps the ribosome interact with GTP-bound translation factors. The chain is Large ribosomal subunit protein uL11 from Streptococcus thermophilus (strain CNRZ 1066).